The following is a 309-amino-acid chain: Homoserine O-succinyltransferase (309 aa).

Residue Cys-142 is the Acyl-thioester intermediate of the active site. The substrate site is built by Lys-163 and Ser-192. The active-site Proton acceptor is His-235. Residue Glu-237 is part of the active site. Arg-249 lines the substrate pocket.

This sequence belongs to the MetA family.

The protein resides in the cytoplasm. The catalysed reaction is L-homoserine + succinyl-CoA = O-succinyl-L-homoserine + CoA. Its pathway is amino-acid biosynthesis; L-methionine biosynthesis via de novo pathway; O-succinyl-L-homoserine from L-homoserine: step 1/1. Transfers a succinyl group from succinyl-CoA to L-homoserine, forming succinyl-L-homoserine. This chain is Homoserine O-succinyltransferase, found in Yersinia pseudotuberculosis serotype O:1b (strain IP 31758).